A 469-amino-acid chain; its full sequence is Spermatogenesis-associated protein 21 (469 aa).

2 disordered regions span residues Met-1 to Gln-76 and His-99 to Pro-157. The segment covering Glu-49 to Arg-61 has biased composition (basic and acidic residues). A compositionally biased stretch (low complexity) spans Ala-62–Ala-73. Positions Ala-105–Ala-132 are enriched in polar residues. Residues Ala-146 to Pro-157 are compositionally biased toward pro residues. Residues Glu-198–Ala-225 adopt a coiled-coil conformation. Positions Val-255–Phe-290 constitute an EF-hand domain. Ca(2+) is bound by residues Asp-268, Asn-270, Asp-272, Arg-274, and Asp-279. Residues Tyr-424–His-469 are disordered. Residues Asn-450–Lys-459 are compositionally biased toward basic and acidic residues.

Functionally, involved in the differentiation of haploid spermatids. This chain is Spermatogenesis-associated protein 21 (SPATA21), found in Homo sapiens (Human).